The primary structure comprises 123 residues: Thioredoxin H-type 1 (123 aa).

A2 is modified (N-acetylalanine). The 118-residue stretch at 2-119 (AATAEVIPAG…IEAKLLKHSQ (118 aa)) folds into the Thioredoxin domain. An intrachain disulfide couples C45 to C48.

It belongs to the thioredoxin family. Plant H-type subfamily.

The protein resides in the cytoplasm. Functionally, participates in various redox reactions through the reversible oxidation of the active center dithiol to a disulfide. The H form is known to activate a number of cytosolic enzymes. This Brassica napus (Rape) protein is Thioredoxin H-type 1 (THL-1).